Consider the following 212-residue polypeptide: Large ribosomal subunit protein uL3 (212 aa).

The disordered stretch occupies residues 136 to 155 (THGNSVSHRVLGSTGQNQTP). At Gln-153 the chain carries N5-methylglutamine.

It belongs to the universal ribosomal protein uL3 family. Part of the 50S ribosomal subunit. Forms a cluster with proteins L14 and L19. Methylated by PrmB.

Functionally, one of the primary rRNA binding proteins, it binds directly near the 3'-end of the 23S rRNA, where it nucleates assembly of the 50S subunit. The sequence is that of Large ribosomal subunit protein uL3 from Acinetobacter baumannii (strain AB307-0294).